The following is a 307-amino-acid chain: 1-phosphofructokinase (307 aa).

Residues 217 to 222 (SMGSDG) and 249 to 250 (GD) each bind ATP. Asp-250 functions as the Proton acceptor in the catalytic mechanism.

The protein belongs to the carbohydrate kinase PfkB family.

It carries out the reaction beta-D-fructose 1-phosphate + ATP = beta-D-fructose 1,6-bisphosphate + ADP + H(+). Catalyzes the ATP-dependent phosphorylation of fructose-l-phosphate to fructose-l,6-bisphosphate. This Borreliella burgdorferi (strain ATCC 35210 / DSM 4680 / CIP 102532 / B31) (Borrelia burgdorferi) protein is 1-phosphofructokinase (fruK).